The sequence spans 371 residues: Putative glutamate--cysteine ligase 2 (371 aa).

The protein belongs to the glutamate--cysteine ligase type 2 family. YbdK subfamily. As to quaternary structure, homodimer.

It catalyses the reaction L-cysteine + L-glutamate + ATP = gamma-L-glutamyl-L-cysteine + ADP + phosphate + H(+). Functionally, ATP-dependent carboxylate-amine ligase which exhibits weak glutamate--cysteine ligase activity. This is Putative glutamate--cysteine ligase 2 from Cronobacter sakazakii (strain ATCC BAA-894) (Enterobacter sakazakii).